A 223-amino-acid polypeptide reads, in one-letter code: Deoxyribose-phosphate aldolase (223 aa).

The Proton donor/acceptor role is filled by D92. Residue K154 is the Schiff-base intermediate with acetaldehyde of the active site. Residue K182 is the Proton donor/acceptor of the active site.

Belongs to the DeoC/FbaB aldolase family. DeoC type 1 subfamily.

It localises to the cytoplasm. The enzyme catalyses 2-deoxy-D-ribose 5-phosphate = D-glyceraldehyde 3-phosphate + acetaldehyde. It functions in the pathway carbohydrate degradation; 2-deoxy-D-ribose 1-phosphate degradation; D-glyceraldehyde 3-phosphate and acetaldehyde from 2-deoxy-alpha-D-ribose 1-phosphate: step 2/2. Functionally, catalyzes a reversible aldol reaction between acetaldehyde and D-glyceraldehyde 3-phosphate to generate 2-deoxy-D-ribose 5-phosphate. The protein is Deoxyribose-phosphate aldolase of Pasteurella multocida (strain Pm70).